The primary structure comprises 643 residues: MGDLENLLLEAAGRTNSAGRSRHPPSSRRREGSYSDGSSDSRDDSDEDRGYASRKPSGSQVPLKKRLEAEREDRAARVEGGYGDGPSDREGDSSEESDFGDDLYKNEEDRQKLAGMTEFQREMILSERADKKGDKNFTEKLRSKRESEKTPVSKKETQPLPASRGVRSSARSADRAAAKDDALNELRAKRMKQQDPAALRKLRDASKGGSGSRDFSSTKRKPLASSNLSSSSQSDSDSRSQSDDEGSNGGMLDSDDDRSDVPTFEDVKEVTIRRSKLAKWLMEPFFEELIVGCFVRVGIGRSKSGPIYRLCWVKNVDATDPDKTYKLENKTTHKYLNVVWGNETSAARWQMAMISDGHPLEEEYRQWIREVERTNGRMPTKQDISEKKEAIQRTNSFVYSAETVKQMLQEKKSASVRPMNVAAEKDRLRKELEIAQSKNDEAGVERIKSKIKQLDASRNKKGVDKKALKLAEMNKKNRAENFKNASEVKSITASLKAGEAGYDPFSRRWTRSSNYYNGKNKGKDGEENEAAVAAAVETNGADAGAGVEATEAALEAAAEAGKLIDTRAPIGQGAEHNQLHNFELSLSLTALQKYGGPQGVQKAFMARKQLTEATVGCRVAENDGKRHGLTLTVSDYKRRRGLL.

Disordered stretches follow at residues 1-107 (MGDL…YKNE) and 124-262 (ILSE…SDVP). At Gly2 the chain carries N-acetylglycine. Basic and acidic residues predominate over residues 65–77 (KRLEAEREDRAAR). At Ser87 the chain carries Phosphoserine. Basic and acidic residues predominate over residues 124 to 157 (ILSERADKKGDKNFTEKLRSKRESEKTPVSKKET). The span at 162-171 (ASRGVRSSAR) shows a compositional bias: low complexity. Residues 172–188 (SADRAAAKDDALNELRA) are compositionally biased toward basic and acidic residues. The segment covering 225–235 (SSNLSSSSQSD) has biased composition (low complexity). Residues 261-396 (VPTFEDVKEV…KKEAIQRTNS (136 aa)) form the Plus3 domain.

In terms of assembly, component of the nuclear PAF1 complex (PAF1C), which consists of VIP2/ELF7/PAF1, VIP3/SKI8/WDR61, VIP4/LEO1, VIP5/RTF1, VIP6/ELF8/CTR9 and CDC73.

Its subcellular location is the nucleus. Functionally, component of the PAF1 complex (PAF1C) which is involved in histone modifications such as methylation on histone H3 'Lys-4' (H3K4me3). Involved in regulation of flowering time. Required for the expression of the flowering repressors and FLC and MADS-box genes of the MAF family. Involved in the control of seed dormancy and germination. The polypeptide is Protein RTF1 homolog (Arabidopsis thaliana (Mouse-ear cress)).